We begin with the raw amino-acid sequence, 592 residues long: Serine/threonine-protein kinase ksg1 (592 aa).

A compositionally biased stretch (polar residues) spans 1–10 (MRNTHNPNET). The interval 1-92 (MRNTHNPNET…NPSSGASTPN (92 aa)) is disordered. The segment covering 11 to 22 (EASEDAENDTQS) has biased composition (acidic residues). Residues 27–37 (SFDHGSSEKLN) are compositionally biased toward basic and acidic residues. Residues 42 to 68 (PKTQNSAIPQSNALNTTPNESTSQIDS) show a composition bias toward polar residues. Phosphoserine occurs at positions 64 and 69. Over residues 80-92 (STPNPSSGASTPN) the composition is skewed to polar residues. The Protein kinase domain occupies 99 to 366 (FKFGEILGEG…VDEIHQHPFF (268 aa)). ATP contacts are provided by residues 109–111 (SYS) and lysine 128. The segment at 130 to 175 (LDKRHIIKEKKEKYVNIEKEALCILSKHPGFIKLFYTFQDAHNLYF) is PIF-pocket. Residues 178-180 (SLA) and glutamate 184 each bind ATP. Aspartate 223 functions as the Proton acceptor in the catalytic mechanism. Residues glutamate 227 and aspartate 241 each contribute to the ATP site. In terms of domain architecture, PH spans 461-572 (ISKIGTLNVY…ELLDKASSIS (112 aa)).

It belongs to the protein kinase superfamily. AGC Ser/Thr protein kinase family. PDPK1 subfamily.

The protein resides in the cytoplasm. It carries out the reaction L-seryl-[protein] + ATP = O-phospho-L-seryl-[protein] + ADP + H(+). It catalyses the reaction L-threonyl-[protein] + ATP = O-phospho-L-threonyl-[protein] + ADP + H(+). Functionally, involved in the control of sexual development and cell growth under stressed conditions. Phosphorylates AGC kinase gad8 at 'Thr-387', activating gad8 kinase activity and promoting sexual development. Phosphorylates AGC kinase psk1 at 'Ser-248', activating psk1 kinase activity and promoting phosphorylation of ribosomal protein S6. The polypeptide is Serine/threonine-protein kinase ksg1 (Schizosaccharomyces pombe (strain 972 / ATCC 24843) (Fission yeast)).